A 299-amino-acid chain; its full sequence is Phosphoribosylaminoimidazole-succinocarboxamide synthase (299 aa).

It belongs to the SAICAR synthetase family.

It carries out the reaction 5-amino-1-(5-phospho-D-ribosyl)imidazole-4-carboxylate + L-aspartate + ATP = (2S)-2-[5-amino-1-(5-phospho-beta-D-ribosyl)imidazole-4-carboxamido]succinate + ADP + phosphate + 2 H(+). It participates in purine metabolism; IMP biosynthesis via de novo pathway; 5-amino-1-(5-phospho-D-ribosyl)imidazole-4-carboxamide from 5-amino-1-(5-phospho-D-ribosyl)imidazole-4-carboxylate: step 1/2. This Streptomyces coelicolor (strain ATCC BAA-471 / A3(2) / M145) protein is Phosphoribosylaminoimidazole-succinocarboxamide synthase.